The chain runs to 139 residues: Acidic phospholipase A2 Tgc-E6 (139 aa).

A signal peptide spans 1 to 16 (MRTLWIMAVLLLGVEG). 7 cysteine pairs are disulfide-bonded: Cys42-Cys132, Cys44-Cys60, Cys59-Cys111, Cys65-Cys139, Cys66-Cys104, Cys73-Cys97, and Cys91-Cys102. Residues Tyr43, Gly45, and Gly47 each coordinate Ca(2+). His63 is an active-site residue. Position 64 (Asp64) interacts with Ca(2+). Asp105 is a catalytic residue.

The protein belongs to the phospholipase A2 family. Group II subfamily. D49 sub-subfamily. As to quaternary structure, monomer. Ca(2+) serves as cofactor. Expressed by the venom gland.

The protein localises to the secreted. It catalyses the reaction a 1,2-diacyl-sn-glycero-3-phosphocholine + H2O = a 1-acyl-sn-glycero-3-phosphocholine + a fatty acid + H(+). Snake venom phospholipase A2 (PLA2) that inhibits the ADP-(IC(50)=272 nM) and collagen-induced (IC(50)=518 nM) human platelet aggregation in platelet rich plasma. Exhibits very high hydrolytic activities toward the synthetic lecithin, and prefers the anionic micelles (dPPC with deoxycholate) to the zwitterionic micelles (dPPC with Triton X-100). PLA2 catalyzes the calcium-dependent hydrolysis of the 2-acyl groups in 3-sn-phosphoglycerides. The polypeptide is Acidic phospholipase A2 Tgc-E6 (Trimeresurus gracilis (Kikuchi habu)).